We begin with the raw amino-acid sequence, 130 residues long: Small ribosomal subunit protein uS11 (130 aa).

This sequence belongs to the universal ribosomal protein uS11 family. In terms of assembly, part of the 30S ribosomal subunit. Interacts with proteins S7 and S18. Binds to IF-3.

In terms of biological role, located on the platform of the 30S subunit, it bridges several disparate RNA helices of the 16S rRNA. Forms part of the Shine-Dalgarno cleft in the 70S ribosome. The sequence is that of Small ribosomal subunit protein uS11 from Syntrophomonas wolfei subsp. wolfei (strain DSM 2245B / Goettingen).